A 282-amino-acid chain; its full sequence is Pseudokinase OPG198 (282 aa).

Methionine 1 and lysine 30 together coordinate ATP. The Protein kinase domain occupies 1 to 282; it reads MESFKYCFDN…DRLRRLFIQD (282 aa).

Belongs to the protein kinase superfamily. Ser/Thr protein kinase family. Poxviruses subfamily. As to quaternary structure, interacts with B1/VPK1. Interacts with host VRK1. Interacts with host VRK2.

Its subcellular location is the host nucleus. With respect to regulation, both catalytically active kinases B1/VPK1 and host VRK2 repress B12 inhibitory activity in a B1/VPK1 deletion mutant strain. Its function is as follows. Pseudokinase that plays a role in viral DNA replication repression by activating the antiviral protein BANF1 and inhibiting the activity of host VRK1, a cellular modulator of BANF1. The sequence is that of Pseudokinase OPG198 (OPG198) from Cynomys gunnisoni (Gunnison's prairie dog).